The following is a 463-amino-acid chain: Lipase 6 (463 aa).

Residues 1 to 16 (MRDLILFLSLLHTIFA) form the signal peptide. Cys-112 and Cys-285 form a disulfide bridge. The Charge relay system role is filled by Ser-196. Asn-231 carries an N-linked (GlcNAc...) asparagine glycan. Residues Asp-348 and His-381 each act as charge relay system in the active site. Cys-364 and Cys-409 are oxidised to a cystine. The N-linked (GlcNAc...) asparagine glycan is linked to Asn-422.

Belongs to the AB hydrolase superfamily. Lipase family. Class Lip subfamily.

The protein localises to the secreted. The catalysed reaction is a triacylglycerol + H2O = a diacylglycerol + a fatty acid + H(+). In terms of biological role, secreted lipase that is able to hydrolyze both the neutral triacylglycerols and the monopalmitate ester Tween 40, allowing the use of hydrolyzed products as carbon sources. Has broad lipolytic activity, which may be important for colonization and subsequent infection, therefore contributing to the persistence and virulence in human tissue. The protein is Lipase 6 of Candida albicans (strain SC5314 / ATCC MYA-2876) (Yeast).